Reading from the N-terminus, the 570-residue chain is BRICHOS domain-containing protein C09F5.1 (570 aa).

At 1-288 (MVVEQIEVIE…YTPELLRSLC (288 aa)) the chain is on the cytoplasmic side. 2 stretches are compositionally biased toward polar residues: residues 93–107 (SGAT…SGDS) and 228–246 (TSTL…SLVS). Disordered regions lie at residues 93-116 (SGAT…GADR) and 218-248 (SSWD…VSRE). A helical membrane pass occupies residues 289–309 (CILLLLLLLLFLMFIIFNAIF). The Extracellular segment spans residues 310-570 (NRYAVSEFLL…RKSINNATLV (261 aa)). Positions 369 to 461 (TAVDFNTGYV…IDDCEGAQWY (93 aa)) constitute a BRICHOS domain. A disulfide bond links cysteine 395 and cysteine 455.

It localises to the membrane. This chain is BRICHOS domain-containing protein C09F5.1, found in Caenorhabditis elegans.